The primary structure comprises 72 residues: 3-deoxy-manno-octulosonate cytidylyltransferase (72 aa).

This sequence belongs to the KdsB family. In terms of assembly, homodimer.

Its subcellular location is the cytoplasm. The catalysed reaction is 3-deoxy-alpha-D-manno-oct-2-ulosonate + CTP = CMP-3-deoxy-beta-D-manno-octulosonate + diphosphate. It functions in the pathway nucleotide-sugar biosynthesis; CMP-3-deoxy-D-manno-octulosonate biosynthesis; CMP-3-deoxy-D-manno-octulosonate from 3-deoxy-D-manno-octulosonate and CTP: step 1/1. It participates in bacterial outer membrane biogenesis; lipopolysaccharide biosynthesis. Activates KDO (a required 8-carbon sugar) for incorporation into bacterial lipopolysaccharide in Gram-negative bacteria. This chain is 3-deoxy-manno-octulosonate cytidylyltransferase (kpsU), found in Escherichia coli.